A 231-amino-acid polypeptide reads, in one-letter code: 7-cyano-7-deazaguanine synthase (231 aa).

Residue 8 to 18 (FSGGQDSTTCL) coordinates ATP. Residues Cys-188, Cys-197, Cys-200, and Cys-203 each coordinate Zn(2+).

The protein belongs to the QueC family. Zn(2+) serves as cofactor.

It catalyses the reaction 7-carboxy-7-deazaguanine + NH4(+) + ATP = 7-cyano-7-deazaguanine + ADP + phosphate + H2O + H(+). It participates in purine metabolism; 7-cyano-7-deazaguanine biosynthesis. Catalyzes the ATP-dependent conversion of 7-carboxy-7-deazaguanine (CDG) to 7-cyano-7-deazaguanine (preQ(0)). This Salmonella gallinarum (strain 287/91 / NCTC 13346) protein is 7-cyano-7-deazaguanine synthase.